The following is a 410-amino-acid chain: Cysteine desulfurase IscS (410 aa).

Residues 80–81 (AT), asparagine 160, glutamine 188, and 208–210 (SGH) contribute to the pyridoxal 5'-phosphate site. Position 211 is an N6-(pyridoxal phosphate)lysine (lysine 211). A pyridoxal 5'-phosphate-binding site is contributed by threonine 248. Cysteine 334 serves as the catalytic Cysteine persulfide intermediate. Residue cysteine 334 coordinates [2Fe-2S] cluster.

The protein belongs to the class-V pyridoxal-phosphate-dependent aminotransferase family. NifS/IscS subfamily. As to quaternary structure, homodimer. Forms a heterotetramer with IscU, interacts with other sulfur acceptors. Requires pyridoxal 5'-phosphate as cofactor.

The protein resides in the cytoplasm. It catalyses the reaction (sulfur carrier)-H + L-cysteine = (sulfur carrier)-SH + L-alanine. The protein operates within cofactor biosynthesis; iron-sulfur cluster biosynthesis. Master enzyme that delivers sulfur to a number of partners involved in Fe-S cluster assembly, tRNA modification or cofactor biosynthesis. Catalyzes the removal of elemental sulfur atoms from cysteine to produce alanine. Functions as a sulfur delivery protein for Fe-S cluster synthesis onto IscU, an Fe-S scaffold assembly protein, as well as other S acceptor proteins. In Rickettsia massiliae (strain Mtu5), this protein is Cysteine desulfurase IscS.